A 258-amino-acid polypeptide reads, in one-letter code: Phosphoribosylformylglycinamidine synthase subunit PurQ (258 aa).

The 232-residue stretch at 7–238 (IGILLMEGTN…QAMYLETEKD (232 aa)) folds into the Glutamine amidotransferase type-1 domain. The active-site Nucleophile is Cys97. Catalysis depends on residues His220 and Glu222.

As to quaternary structure, part of the FGAM synthase complex composed of 1 PurL, 1 PurQ and 2 PurS subunits.

It is found in the cytoplasm. The catalysed reaction is N(2)-formyl-N(1)-(5-phospho-beta-D-ribosyl)glycinamide + L-glutamine + ATP + H2O = 2-formamido-N(1)-(5-O-phospho-beta-D-ribosyl)acetamidine + L-glutamate + ADP + phosphate + H(+). It catalyses the reaction L-glutamine + H2O = L-glutamate + NH4(+). It participates in purine metabolism; IMP biosynthesis via de novo pathway; 5-amino-1-(5-phospho-D-ribosyl)imidazole from N(2)-formyl-N(1)-(5-phospho-D-ribosyl)glycinamide: step 1/2. Functionally, part of the phosphoribosylformylglycinamidine synthase complex involved in the purines biosynthetic pathway. Catalyzes the ATP-dependent conversion of formylglycinamide ribonucleotide (FGAR) and glutamine to yield formylglycinamidine ribonucleotide (FGAM) and glutamate. The FGAM synthase complex is composed of three subunits. PurQ produces an ammonia molecule by converting glutamine to glutamate. PurL transfers the ammonia molecule to FGAR to form FGAM in an ATP-dependent manner. PurS interacts with PurQ and PurL and is thought to assist in the transfer of the ammonia molecule from PurQ to PurL. This chain is Phosphoribosylformylglycinamidine synthase subunit PurQ, found in Thermoplasma volcanium (strain ATCC 51530 / DSM 4299 / JCM 9571 / NBRC 15438 / GSS1).